We begin with the raw amino-acid sequence, 290 residues long: Translin-associated protein X (290 aa).

The tract at residues 1–34 (MNGKEGPGGFRKRKHDNFPHNQRREGKDASSSSP) is disordered. A compositionally biased stretch (basic and acidic residues) spans 16-28 (DNFPHNQRREGKD). Residues 73–208 (LLHRITSAPD…MRMCINSVGN (136 aa)) form an interaction with C1D region. Residues glutamate 129 and glutamate 197 each coordinate Mg(2+). Lysine 279 participates in a covalent cross-link: Glycyl lysine isopeptide (Lys-Gly) (interchain with G-Cter in SUMO2).

It belongs to the translin family. As to quaternary structure, ring-shaped heterooctamer of six TSN and two TSNAX subunits. Interacts with GOLGA3, TSNAXIP1, SUN1 and AKAP9. Interacts with the homodimeric form of C1D following gamma-radiation. Interacts with TSN and C1D in a mutually exclusive manner. Sumoylated with SUMO1. Detected in cerebellum.

The protein resides in the cytoplasm. It localises to the perinuclear region. It is found in the golgi apparatus. Its subcellular location is the nucleus. Its function is as follows. Acts in combination with TSN as an endonuclease involved in the activation of the RNA-induced silencing complex (RISC). Possible role in spermatogenesis. In Rattus norvegicus (Rat), this protein is Translin-associated protein X (Tsnax).